The chain runs to 247 residues: Ubiquinone biosynthesis O-methyltransferase (247 aa).

Arg39, Gly70, Asp91, and Met134 together coordinate S-adenosyl-L-methionine.

This sequence belongs to the methyltransferase superfamily. UbiG/COQ3 family.

It carries out the reaction a 3-demethylubiquinol + S-adenosyl-L-methionine = a ubiquinol + S-adenosyl-L-homocysteine + H(+). It catalyses the reaction a 3-(all-trans-polyprenyl)benzene-1,2-diol + S-adenosyl-L-methionine = a 2-methoxy-6-(all-trans-polyprenyl)phenol + S-adenosyl-L-homocysteine + H(+). It participates in cofactor biosynthesis; ubiquinone biosynthesis. O-methyltransferase that catalyzes the 2 O-methylation steps in the ubiquinone biosynthetic pathway. The chain is Ubiquinone biosynthesis O-methyltransferase from Cereibacter sphaeroides (strain ATCC 17025 / ATH 2.4.3) (Rhodobacter sphaeroides).